The following is a 453-amino-acid chain: Ribosome biogenesis protein SSF1 (453 aa).

A compositionally biased stretch (basic residues) spans 1 to 11 (MAKRRQKKRTH). Disordered regions lie at residues 1 to 22 (MAKRRQKKRTHAQLTPEQEQGI), 275 to 324 (KAKH…PRKK), and 374 to 453 (KMRL…SEVE). Positions 26–348 (MVIRVGQTSL…LVKIEEGICS (323 aa)) constitute a Brix domain. Over residues 288 to 300 (PVEKKDNKEREKE) the composition is skewed to basic and acidic residues. T301 is subject to Phosphothreonine. Positions 374–398 (KMRLKEQRKKEQEENIAKKKAVKDA) are enriched in basic and acidic residues. Basic residues predominate over residues 399–409 (KKQRKLERRKA). Positions 410 to 423 (RAAEGGEGQGKDDA) are enriched in basic and acidic residues. Residues 442 to 453 (EDLDSDLFSEVE) show a composition bias toward acidic residues.

In terms of assembly, part of a complex that includes BRX1, RPF1, RPF2 and SSF1 or SSF2.

The protein resides in the nucleus. The protein localises to the nucleolus. Functionally, required for biogenesis of the 60S ribosomal subunit. This Saccharomyces cerevisiae (strain ATCC 204508 / S288c) (Baker's yeast) protein is Ribosome biogenesis protein SSF1 (SSF1).